A 288-amino-acid chain; its full sequence is Elongation factor Ts (288 aa).

The tract at residues 82-85 is involved in Mg(2+) ion dislocation from EF-Tu; that stretch reads TDFV.

This sequence belongs to the EF-Ts family.

The protein resides in the cytoplasm. Functionally, associates with the EF-Tu.GDP complex and induces the exchange of GDP to GTP. It remains bound to the aminoacyl-tRNA.EF-Tu.GTP complex up to the GTP hydrolysis stage on the ribosome. The protein is Elongation factor Ts of Chlorobium phaeovibrioides (strain DSM 265 / 1930) (Prosthecochloris vibrioformis (strain DSM 265)).